A 193-amino-acid polypeptide reads, in one-letter code: Ion-translocating oxidoreductase complex subunit A (193 aa).

Helical transmembrane passes span 5 to 25 (LLLL…FLGL), 39 to 59 (IGMG…SYLI), 63 to 83 (ILAP…VIAV), 102 to 122 (VLGI…VALL), 134 to 154 (IIYG…FSAM), and 171 to 191 (SIAM…TGLV).

It belongs to the NqrDE/RnfAE family. In terms of assembly, the complex is composed of six subunits: RnfA, RnfB, RnfC, RnfD, RnfE and RnfG.

The protein resides in the cell inner membrane. Its function is as follows. Part of a membrane-bound complex that couples electron transfer with translocation of ions across the membrane. This chain is Ion-translocating oxidoreductase complex subunit A, found in Aliivibrio salmonicida (strain LFI1238) (Vibrio salmonicida (strain LFI1238)).